The chain runs to 118 residues: MGKFKLGNWAAMIGMAACWCLIAGGIMGIWYERRYIAIYSICVGGVLYPLLYPLSFLGPLKAIFHQYYVAAALMAGLSVLCYFLVPTMLAAMVMDISAVVFLISAIKGERGDFFDKQD.

The next 4 membrane-spanning stretches (helical) occupy residues 9 to 29 (WAAMIGMAACWCLIAGGIMGI), 36 to 56 (IAIYSICVGGVLYPLLYPLSF), 62 to 82 (AIFHQYYVAAALMAGLSVLCY), and 83 to 103 (FLVPTMLAAMVMDISAVVFLI).

This sequence belongs to the p22phox family. In terms of assembly, composed of a heavy chain and a light chain.

It localises to the cell membrane. Its function is as follows. Critical component of the membrane-bound oxidase of phagocytes that generates superoxide. This is Superoxide-generating NADPH oxidase light chain subunit (cybA) from Dictyostelium discoideum (Social amoeba).